The primary structure comprises 764 residues: Cyclin-F (764 aa).

Residues 19 to 27 (RKRVRKRAS) carry the Nuclear localization signal 1 motif. The region spanning 28–75 (AVSLLSLPEELLVFVLQCLSAEDLLSVRAVHSHLCDIIDTNASIWARV) is the F-box domain. The Cyclin N-terminal domain occupies 307–404 (TKRYILVDWL…EVISVLDGKI (98 aa)). The D box 1 signature appears at 309–312 (RYIL). Positions 570–575 (SSKRRR) match the Nuclear localization signal 2 motif. The tract at residues 583–738 (RGAFVATPTA…PSQRIRRQVK (156 aa)) is PEST. Positions 662–754 (CEEDEQEPPT…HSAGEAEQED (93 aa)) are disordered. The span at 682-692 (SSSSTSSSSSS) shows a compositional bias: low complexity. Residues 702-722 (SGYSSIQSFPSPTGSSALVSP) are compositionally biased toward polar residues. Over residues 732 to 742 (RIRRQVKRKNT) the composition is skewed to basic residues.

This sequence belongs to the cyclin family. Cyclin AB subfamily. As to quaternary structure, component of the SCF(CCNF) complex. In terms of tissue distribution, expressed in the brain.

It localises to the nucleus. Its subcellular location is the cytoplasm. The protein localises to the perinuclear region. It is found in the cytoskeleton. The protein resides in the microtubule organizing center. It localises to the centrosome. Its subcellular location is the centriole. Its function is as follows. Substrate recognition component of a SCF (SKP1-CUL1-F-box protein) E3 ubiquitin-protein ligase complex which mediates the ubiquitination and subsequent proteasomal degradation of target proteins. The SCF(CCNF) E3 ubiquitin-protein ligase complex is an integral component of the ubiquitin proteasome system (UPS) and links proteasome degradation to the cell cycle. Mediates the substrate recognition and the proteasomal degradation of various target proteins during G2 phase involved in the regulation of cell cycle progression and in the maintenance of genome stability. May play a role in motor neuron development and axonal outgrowth. The sequence is that of Cyclin-F (ccnf) from Danio rerio (Zebrafish).